A 168-amino-acid chain; its full sequence is Transcriptional repressor NrdR (168 aa).

The interval methionine 1–serine 21 is disordered. The segment at cysteine 3–cysteine 34 is a zinc-finger region. The span at arginine 7–glutamate 20 shows a compositional bias: basic and acidic residues. The ATP-cone domain maps to isoleucine 49–aspartate 139.

This sequence belongs to the NrdR family. It depends on Zn(2+) as a cofactor.

Its function is as follows. Negatively regulates transcription of bacterial ribonucleotide reductase nrd genes and operons by binding to NrdR-boxes. The protein is Transcriptional repressor NrdR of Synechococcus elongatus (strain ATCC 33912 / PCC 7942 / FACHB-805) (Anacystis nidulans R2).